The primary structure comprises 496 residues: MTKPTTMAIFLVLALSIAQLLPSLVAGTGRPRVIIVGAGISGISAGKRIWEAGIADVLILEATDRIGGRMHKQSFAGVNVEIGANWVEGVNGEKKNPIWPIVNSTLKLRSFRSDFDSLAQNVYKDGGLCDEAYVQKRMDRADEVDKSGENLSATLHPSGRDDMSILSMQRLNDHLPNGPSSPVDMAVDYFTYDYEFAEPPRVTSLQNTVPLPTFTDFGDDTYFVADQRGYESVVHHLAGQYLNADKSGNIADARLKLNKVVREISYSSTGVTVKTEDNSTYQADYVMVSASLGVLQSDLIQFKPQLPSWKILAIYQFDMAVYTKIFVKFPKKFWPEGAGREFFLYASTRRGYYGVWQEFEKQYPDANVLLVTVTDEESRRIEQQPDSQTKAEIMEVVRCMFPDEDVPDATDILVPRWWSDRFFRGSFSNWPIGVSRYEYDQLRAPVGRVYFTGEHTSERYNGYVHGAYLAGIDSAEILINCAQKKMCKYNVGGKHG.

Positions 1–27 are cleaved as a signal peptide; it reads MTKPTTMAIFLVLALSIAQLLPSLVAG. FAD is bound by residues glutamate 61 and arginine 69. N-linked (GlcNAc...) asparagine glycans are attached at residues asparagine 103 and asparagine 150. Valine 261 contributes to the FAD binding site. A glycan (N-linked (GlcNAc...) asparagine) is linked at asparagine 278. Glutamate 454 contributes to the FAD binding site.

This sequence belongs to the flavin monoamine oxidase family. FAD serves as cofactor.

It localises to the secreted. The protein resides in the extracellular space. The protein localises to the apoplast. The protein operates within amine and polyamine degradation; spermine degradation. Its function is as follows. Flavoenzyme involved in polyamine back-conversion. Catalyzes the oxidation of the secondary amino group of polyamines, such as spermine and spermidine. The polypeptide is Polyamine oxidase 6 (Oryza sativa subsp. japonica (Rice)).